A 348-amino-acid chain; its full sequence is Killer cell immunoglobulin-like receptor 2DL2 (348 aa).

The signal sequence occupies residues 1–21 (MSLMVVSMACVGFFLLQGAWP). Topologically, residues 22 to 245 (HEGVHRKPSL…SKTGNPRHLH (224 aa)) are extracellular. Ig-like C2-type domains follow at residues 42–107 (EETV…VTHS) and 142–205 (GESV…FRDS). 2 cysteine pairs are disulfide-bonded: Cys49/Cys100 and Cys149/Cys198. N-linked (GlcNAc...) asparagine glycosylation is found at Asn84, Asn178, and Asn211. Residues 246–264 (ILIGTSVVIILFILLFFLL) traverse the membrane as a helical segment. The Cytoplasmic segment spans residues 265-348 (HRWCSNKKNA…ESRSKVVSCP (84 aa)).

This sequence belongs to the immunoglobulin superfamily.

It is found in the cell membrane. Functionally, receptor on natural killer (NK) cells for HLA-Cw1, 3, 7, and 8 allotypes. Inhibits the activity of NK cells thus preventing cell lysis. The sequence is that of Killer cell immunoglobulin-like receptor 2DL2 from Homo sapiens (Human).